We begin with the raw amino-acid sequence, 106 residues long: UPF0473 protein LCABL_08490 (106 aa).

The protein belongs to the UPF0473 family.

The polypeptide is UPF0473 protein LCABL_08490 (Lacticaseibacillus casei (strain BL23) (Lactobacillus casei)).